The primary structure comprises 159 residues: NADH-quinone oxidoreductase subunit B (159 aa).

Residues cysteine 36, cysteine 37, cysteine 102, and cysteine 132 each coordinate [4Fe-4S] cluster.

It belongs to the complex I 20 kDa subunit family. As to quaternary structure, NDH-1 is composed of 14 different subunits. Subunits NuoB, C, D, E, F, and G constitute the peripheral sector of the complex. The cofactor is [4Fe-4S] cluster.

It is found in the cell inner membrane. The catalysed reaction is a quinone + NADH + 5 H(+)(in) = a quinol + NAD(+) + 4 H(+)(out). Functionally, NDH-1 shuttles electrons from NADH, via FMN and iron-sulfur (Fe-S) centers, to quinones in the respiratory chain. The immediate electron acceptor for the enzyme in this species is believed to be ubiquinone. Couples the redox reaction to proton translocation (for every two electrons transferred, four hydrogen ions are translocated across the cytoplasmic membrane), and thus conserves the redox energy in a proton gradient. The chain is NADH-quinone oxidoreductase subunit B from Acidovorax ebreus (strain TPSY) (Diaphorobacter sp. (strain TPSY)).